Reading from the N-terminus, the 476-residue chain is Cysteine--tRNA ligase (476 aa).

Cys-28 contacts Zn(2+). The short motif at 30–40 is the 'HIGH' region element; it reads PTVYDNTHLGH. The Zn(2+) site is built by Cys-208, His-233, and Glu-237. The short motif at 265-269 is the 'KMSKS' region element; that stretch reads KMSKS. Lys-268 provides a ligand contact to ATP.

It belongs to the class-I aminoacyl-tRNA synthetase family. Zn(2+) is required as a cofactor.

It localises to the cytoplasm. The catalysed reaction is tRNA(Cys) + L-cysteine + ATP = L-cysteinyl-tRNA(Cys) + AMP + diphosphate. This Methanococcus maripaludis (strain DSM 14266 / JCM 13030 / NBRC 101832 / S2 / LL) protein is Cysteine--tRNA ligase.